Here is a 153-residue protein sequence, read N- to C-terminus: UPF0266 membrane protein YPTB1631 (153 aa).

The next 3 helical transmembrane spans lie at 6-26 (LVLVVFIALLLIYAIYDEFIM), 45-65 (LDCMIFVGLIGILIYNNVMAH), and 67-87 (APLTTYLLVGLALVAVYISYI).

Belongs to the UPF0266 family.

The protein localises to the cell inner membrane. The polypeptide is UPF0266 membrane protein YPTB1631 (Yersinia pseudotuberculosis serotype I (strain IP32953)).